Consider the following 410-residue polypeptide: MSSVIERFLRYVAIDTQSNEESQTTPSTGKQLNLARLLEQELKELGLQDARIQEGYVYGTLPANSTKAIPAIGFIAHMDTSPDFSGTNVKAQLVENYDGQDILLNPEHNLVLSPADFPELLDYIGKTLITTDGTTLLGADDKAGIAEIMTAIAYLTAHPEIEHGTICVAFTPDEEIGRGADQFDVAGFGADFAYTVDGGPIGELEYENFNAAKAIVKVKGRNVHPGNAKNKMINSILLANEYIVKLPPQETPATTEGYEGFYHLNDIRGDVEETTLYYIIRDFAEDSFAKRKETMLNLAEECNKKYGSGHFHVEITDQYKNMKEKIQPVMHIVDKAQKAMETVGVKPLIKPIRGGTDGSRLSFMGLPTPNLFTGGHNYHGRYEFIPTFAMEKSVEVILKIIELYAEEHSN.

Histidine 77 is a binding site for Zn(2+). The active site involves aspartate 79. Aspartate 140 provides a ligand contact to Zn(2+). Glutamate 174 serves as the catalytic Proton acceptor. The Zn(2+) site is built by glutamate 175, aspartate 197, and histidine 379.

It belongs to the peptidase M20B family. Requires Zn(2+) as cofactor.

The protein resides in the cytoplasm. It catalyses the reaction Release of the N-terminal residue from a tripeptide.. Cleaves the N-terminal amino acid of tripeptides. In Desulfitobacterium hafniense (strain Y51), this protein is Peptidase T.